The primary structure comprises 292 residues: Peroxisomal 2,4-dienoyl-CoA reductase [(3E)-enoyl-CoA-producing] (292 aa).

Residue A2 is modified to N-acetylalanine. NADP(+) is bound by residues 35 to 40, 60 to 64, and D86; these read GGGSGI and RSLPR. R60 is a substrate binding site. Substrate is bound by residues R88, F118, and 126-128; that span reads SFN. K151 is subject to N6-acetyllysine. NADP(+) is bound by residues K182 and 208–214; that span reads PGPISGT. R219 lines the substrate pocket. The residue at position 287 (S287) is a Phosphoserine. Residues 290-292 carry the Microbody targeting signal motif; it reads AKL. K291 carries the N6-acetyllysine modification.

It belongs to the short-chain dehydrogenases/reductases (SDR) family. 2,4-dienoyl-CoA reductase subfamily. As to quaternary structure, monomer, dimer and oligomer.

It is found in the peroxisome. It carries out the reaction a (2E,4Z)-dienoyl-CoA + NADPH + H(+) = a 4,5-saturated-(3E)-enoyl-CoA + NADP(+). It catalyses the reaction a (2E,4E)-dienoyl-CoA + NADPH + H(+) = a 4,5-saturated-(3E)-enoyl-CoA + NADP(+). The catalysed reaction is (2E,4E)-hexadienoyl-CoA + NADPH + H(+) = (3E)-hexenoyl-CoA + NADP(+). The enzyme catalyses (2E,4E)-decadienoyl-CoA + NADPH + H(+) = (3E)-decenoyl-CoA + NADP(+). It carries out the reaction (2E,4Z,7Z,10Z,13Z,16Z,19Z)-docosaheptaenoyl-CoA + NADPH + H(+) = (3E,7Z,10Z,13Z,16Z,19Z)-docosahexaenoyl-CoA + NADP(+). Its function is as follows. Auxiliary enzyme of beta-oxidation. Participates in the degradation of unsaturated fatty enoyl-CoA esters having double bonds in both even- and odd-numbered positions in peroxisome. Catalyzes the NADP-dependent reduction of 2,4-dienoyl-CoA to yield trans-3-enoyl-CoA. Has activity towards short and medium chain 2,4-dienoyl-CoAs, but also towards 2,4,7,10,13,16,19-docosaheptaenoyl-CoA, suggesting that it does not constitute a rate limiting step in the peroxisomal degradation of docosahexaenoic acid. This is Peroxisomal 2,4-dienoyl-CoA reductase [(3E)-enoyl-CoA-producing] (DECR2) from Pongo abelii (Sumatran orangutan).